The sequence spans 470 residues: MKAFPETFLWGGATAANQVEGAWQEDGKGISTSDLQPHGVMGKMEPRILGKENIKDVAIDFYHRYPEDIALFAEMGFTCLRISIAWARIFPQGDEVEPNEAGLAFYDRLFDEMAQAGIKPLVTLSHYEMPYGLVKNYGGWANRAVIDHFEHYARTVFTRYQHKVALWLTFNEINMSLHAPFTGVGLAEESGEAEVYQAIHHQLVASARAVKACHSLLPEAKIGNMLLGGLVYPLTCQPQDMLQAMEENRRWMFFGDVQARGQYPGYMQRFFRDHNITIEMTESDAEDLKHTVDFISFSYYMTGCVSHDESINKNAQGNILNMIPNPHLKSSEWGWQIDPVGLRVLLNTLWDRYQKPLFIVENGLGAKDSVEADGSIQDDYRIAYLNDHLVQVNEAIADGVDIMGYTSWGPIDLVSASHSQMSKRYGFIYVDRDDNGEGSLTRTRKKSFGWYAEVIKTRGLSLKKITIKAP.

Catalysis depends on Glu-172, which acts as the Proton donor. Glu-361 (nucleophile) is an active-site residue.

This sequence belongs to the glycosyl hydrolase 1 family.

It catalyses the reaction 6-phospho-beta-D-glucosyl-(1-&gt;4)-D-glucose + H2O = D-glucose 6-phosphate + D-glucose. Its function is as follows. Catalyzes the hydrolysis of phosphorylated beta-glucosides into glucose-6-phosphate (G-6-P) and aglycone. It has a high affinity for phosphorylated aromatic beta-glucosides (p-nitrophenyl-beta-glucoside, phenyl beta-glucoside, arbutin and phosphorylated salicin), and a low affinity for phosphorylated beta-methyl-glucoside. The protein is 6-phospho-beta-glucosidase BglB (bglB) of Escherichia coli (strain K12).